Consider the following 168-residue polypeptide: 2-C-methyl-D-erythritol 2,4-cyclodiphosphate synthase (168 aa).

2 residues coordinate a divalent metal cation: aspartate 13 and histidine 15. Residues 13–15 and 39–40 contribute to the 4-CDP-2-C-methyl-D-erythritol 2-phosphate site; these read DVH and HS. Histidine 47 provides a ligand contact to a divalent metal cation. 4-CDP-2-C-methyl-D-erythritol 2-phosphate is bound by residues 61–63, 66–70, phenylalanine 144, and lysine 147; these read DIG and FPDTD.

It belongs to the IspF family. Homotrimer. A divalent metal cation is required as a cofactor.

The enzyme catalyses 4-CDP-2-C-methyl-D-erythritol 2-phosphate = 2-C-methyl-D-erythritol 2,4-cyclic diphosphate + CMP. The protein operates within isoprenoid biosynthesis; isopentenyl diphosphate biosynthesis via DXP pathway; isopentenyl diphosphate from 1-deoxy-D-xylulose 5-phosphate: step 4/6. Its function is as follows. Involved in the biosynthesis of isopentenyl diphosphate (IPP) and dimethylallyl diphosphate (DMAPP), two major building blocks of isoprenoid compounds. Catalyzes the conversion of 4-diphosphocytidyl-2-C-methyl-D-erythritol 2-phosphate (CDP-ME2P) to 2-C-methyl-D-erythritol 2,4-cyclodiphosphate (ME-CPP) with a corresponding release of cytidine 5-monophosphate (CMP). The sequence is that of 2-C-methyl-D-erythritol 2,4-cyclodiphosphate synthase from Ralstonia pickettii (strain 12J).